The following is a 313-amino-acid chain: MSDQKTQHLPTAIFVMGPTASGKTALSVALRQHLPVELISVDSALIYRGMDIGTAKPTTEEQALAPHRLINILDPSQPYSAADFCHDALKEMAEITASGRIPLLVGGTMLYFKALLEGLSPLPSANPVIRAQIEQQAAEQGWDALHQQLQKIDPAAALRIHPNDPQRLSRALEVFLISGKTLTELTTLSGESLPYRVHQFAIAPAKRELLHQRIEARFHQMLESGFEEEVKALYARHDLHVDLPSIRCVGYRQMWSYLSGEIDYDEMIYRGICATRQLAKRQITWLRGWKSVHWLDSSQPEQALSTVMQVVSA.

17–24 (GPTASGKT) provides a ligand contact to ATP. 19–24 (TASGKT) contacts substrate. 4 interaction with substrate tRNA regions span residues 42-45 (DSAL), 166-170 (QRLSR), 247-252 (RCVGYR), and 280-287 (KRQITWLR).

The protein belongs to the IPP transferase family. Monomer. Mg(2+) serves as cofactor.

It carries out the reaction adenosine(37) in tRNA + dimethylallyl diphosphate = N(6)-dimethylallyladenosine(37) in tRNA + diphosphate. In terms of biological role, catalyzes the transfer of a dimethylallyl group onto the adenine at position 37 in tRNAs that read codons beginning with uridine, leading to the formation of N6-(dimethylallyl)adenosine (i(6)A). In Photorhabdus laumondii subsp. laumondii (strain DSM 15139 / CIP 105565 / TT01) (Photorhabdus luminescens subsp. laumondii), this protein is tRNA dimethylallyltransferase.